We begin with the raw amino-acid sequence, 377 residues long: S-adenosylmethionine synthase (377 aa).

H14 contributes to the ATP binding site. D16 lines the Mg(2+) pocket. E42 serves as a coordination point for K(+). Q98 provides a ligand contact to L-methionine. The tract at residues 98–108 (QSADIALGIDL) is flexible loop. ATP is bound by residues 162 to 164 (DMK), 228 to 229 (RF), D237, 243 to 244 (RK), A260, and K264. An L-methionine-binding site is contributed by D237. K268 is an L-methionine binding site.

The protein belongs to the AdoMet synthase family. Homotetramer; dimer of dimers. Mg(2+) serves as cofactor. It depends on K(+) as a cofactor.

The protein localises to the cytoplasm. It carries out the reaction L-methionine + ATP + H2O = S-adenosyl-L-methionine + phosphate + diphosphate. It functions in the pathway amino-acid biosynthesis; S-adenosyl-L-methionine biosynthesis; S-adenosyl-L-methionine from L-methionine: step 1/1. In terms of biological role, catalyzes the formation of S-adenosylmethionine (AdoMet) from methionine and ATP. The overall synthetic reaction is composed of two sequential steps, AdoMet formation and the subsequent tripolyphosphate hydrolysis which occurs prior to release of AdoMet from the enzyme. This chain is S-adenosylmethionine synthase, found in Mesoplasma florum (strain ATCC 33453 / NBRC 100688 / NCTC 11704 / L1) (Acholeplasma florum).